A 626-amino-acid chain; its full sequence is Glutamine--fructose-6-phosphate aminotransferase [isomerizing] (626 aa).

Residue cysteine 2 is the Nucleophile; for GATase activity of the active site. The 221-residue stretch at 2 to 222 (CGIVGYIGPQ…NGELARLTPT (221 aa)) folds into the Glutamine amidotransferase type-2 domain. 2 SIS domains span residues 293–441 (LPPS…QRQS) and 471–616 (YIEA…VDQP). Residue lysine 621 is the For Fru-6P isomerization activity of the active site.

Homodimer.

The protein localises to the cytoplasm. It catalyses the reaction D-fructose 6-phosphate + L-glutamine = D-glucosamine 6-phosphate + L-glutamate. Catalyzes the first step in hexosamine metabolism, converting fructose-6P into glucosamine-6P using glutamine as a nitrogen source. In Thermosynechococcus vestitus (strain NIES-2133 / IAM M-273 / BP-1), this protein is Glutamine--fructose-6-phosphate aminotransferase [isomerizing].